The sequence spans 355 residues: Putative cyclin-A3-1 (355 aa).

The protein belongs to the cyclin family. Cyclin AB subfamily.

The sequence is that of Putative cyclin-A3-1 (CYCA3-1) from Arabidopsis thaliana (Mouse-ear cress).